The chain runs to 536 residues: MGCVHCKEKISGKGQGGSGTGTPAHPPSQYDPDPTQLSGAFTHIPDFNNFHAAAVSPPVPFSGPGFYPCNTLQAHSSITGGGVTLFIALYDYEARTEDDLSFQKGEKFHIINNTEGDWWEARSLSSGATGYIPSNYVAPVDSIQAEEWYFGKIGRKDAERQLLCHGNCRGTFLIRESETTKGAYSLSIRDWDEAKGDHVKHYKIRKLDSGGYYITTRAQFDTIQQLVQHYIERAAGLCCRLAVPCPKGTPKLADLSVKTKDVWEIPRESLQLLQKLGNGQFGEVWMGTWNGTTKVAVKTLKPGTMSPEAFLEEAQIMKRLRHDKLVQLYAVVSEEPIYIVTEFMSQGSLLDFLKDGDGRYLKLPQLVDMAAQIAAGMAYIERMNYIHRDLRAANILVGDNLVCKIADFGLARLIEDNEYTARQGAKFPIKWTAPEAALFGKFTIKSDVWSFGILLTELVTKGRVPYPGMNNREVLEQVERGYRMQCPGGCPPSLHDVMVQCWKREPEERPTFEYLQSFLEDYFTATEPQYQPGDNQ.

G2 is lipidated: N-myristoyl glycine. 2 S-palmitoyl cysteine lipidation sites follow: C3 and C6. Residues 10–36 (ISGKGQGGSGTGTPAHPPSQYDPDPTQ) are disordered. The SH3 domain occupies 81 to 142 (GGVTLFIALY…PSNYVAPVDS (62 aa)). The SH2 domain occupies 148–245 (WYFGKIGRKD…GLCCRLAVPC (98 aa)). The Protein kinase domain maps to 270-523 (LQLLQKLGNG…YLQSFLEDYF (254 aa)). ATP is bound by residues 276-284 (LGNGQFGEV) and K298. D389 acts as the Proton acceptor in catalysis. Position 419 is a phosphotyrosine; by autocatalysis (Y419). Y530 carries the post-translational modification Phosphotyrosine.

Belongs to the protein kinase superfamily. Tyr protein kinase family. SRC subfamily. In terms of processing, phosphorylated. There are elevated levels of this protein in neural and hematopoietic tissues.

It catalyses the reaction L-tyrosyl-[protein] + ATP = O-phospho-L-tyrosyl-[protein] + ADP + H(+). In terms of biological role, may participate in signaling pathways. In Gallus gallus (Chicken), this protein is Proto-oncogene tyrosine-protein kinase Yrk (YRK).